The primary structure comprises 203 residues: Ras-related protein Rab-13 (203 aa).

GTP is bound by residues S17, G18, G20, K21, T22, C23, and T40. Residue T22 coordinates Mg(2+). Positions 31-45 match the Switch 1 motif; that stretch reads DSFNNTYISTIGIDF. T40 serves as a coordination point for Mg(2+). Glycyl lysine isopeptide (Lys-Gly) (interchain with G-Cter in ubiquitin) cross-links involve residues K46 and K58. A Mg(2+)-binding site is contributed by D63. The Switch 2 motif lies at 63-80; the sequence is DTAGQERFKTITTAYYRG. Positions 66, 121, 122, 124, 152, and 153 each coordinate GTP. The segment at 173-203 is disordered; the sequence is SGGRRSGNSHKAPGTDLKPCDKKNTSKCSLG. S178 is modified (phosphoserine). Residue C200 is modified to Cysteine methyl ester. Residue C200 is the site of S-geranylgeranyl cysteine attachment. Positions 201 to 203 are cleaved as a propeptide — removed in mature form; it reads SLG.

Belongs to the small GTPase superfamily. Rab family. As to quaternary structure, interacts (GTP-bound form) with MICALL2; competes with RAB8A and is involved in tight junctions assembly. Interacts (GTP-bound form) with MICALL1. Interacts (GTP-bound form) with MICAL1, MICAL3, MICALCL, EHBP1 and EHBP1L1; ternary complexes of RAB8A, RAB13 and either MICAL1 or EHBP1L1 are possible. Interacts with PRKACA; downstream effector of RAB13 involved in tight junction assembly. Interacts with GRB2; may recruit RAB13 to the leading edge of migrating endothelial cells where it can activate RHOA. Interacts (isoprenylated form) with PDE6D; dissociates RAB13 from membranes. Interacts with BICDL2/BICDR2. Interacts with LEPROT and LEPROTL1. Mg(2+) serves as cofactor. Post-translationally, ubiquitinated via 'Lys-11'-linked ubiquitination on Lys-46 and Lys-58; impairing the recruitment of guanosine diphosphate (GDP) dissociation inhibitor 1/GDI1.

The protein localises to the cell membrane. Its subcellular location is the cytoplasmic vesicle membrane. It is found in the cell junction. The protein resides in the tight junction. It localises to the golgi apparatus. The protein localises to the trans-Golgi network membrane. Its subcellular location is the recycling endosome membrane. It is found in the cell projection. The protein resides in the lamellipodium. The catalysed reaction is GTP + H2O = GDP + phosphate + H(+). Regulated by guanine nucleotide exchange factors (GEFs) including DENND1C, which promote the exchange of bound GDP for free GTP. Regulated by GTPase activating proteins (GAPs) which increase the GTP hydrolysis activity. Inhibited by GDP dissociation inhibitors (GDIs). Activated in response to insulin. In terms of biological role, the small GTPases Rab are key regulators of intracellular membrane trafficking, from the formation of transport vesicles to their fusion with membranes. Rabs cycle between an inactive GDP-bound form and an active GTP-bound form that is able to recruit to membranes different sets of downstream effectors directly responsible for vesicle formation, movement, tethering and fusion. RAB13 is involved in endocytic recycling and regulates the transport to the plasma membrane of transmembrane proteins like the tight junction protein OCLN/occludin. Thereby, it regulates the assembly and the activity of tight junctions. Moreover, it may also regulate tight junction assembly by activating the PKA signaling pathway and by reorganizing the actin cytoskeleton through the activation of the downstream effectors PRKACA and MICALL2 respectively. Through its role in tight junction assembly, may play a role in the establishment of Sertoli cell barrier. Plays also a role in angiogenesis through regulation of endothelial cells chemotaxis. Also involved in neurite outgrowth. Has also been proposed to play a role in post-Golgi membrane trafficking from the TGN to the recycling endosome. Finally, it has been involved in insulin-induced transport to the plasma membrane of the glucose transporter GLUT4 and therefore may play a role in glucose homeostasis. In Canis lupus familiaris (Dog), this protein is Ras-related protein Rab-13 (RAB13).